The primary structure comprises 257 residues: Uxu operon transcriptional regulator (257 aa).

One can recognise an HTH gntR-type domain in the interval 8–76 (QRPYQEVGAM…RGAGIYVLDN (69 aa)). The segment at residues 36-55 (EREIAEMLDVTRTVVREALI) is a DNA-binding region (H-T-H motif).

Its function is as follows. Repressor for the uxuRBA operon. This is Uxu operon transcriptional regulator (uxuR) from Escherichia coli (strain K12).